The primary structure comprises 477 residues: UDP-N-acetylmuramate--L-alanine ligase (477 aa).

An ATP-binding site is contributed by 112 to 118; that stretch reads GTHGKTT.

It belongs to the MurCDEF family.

It is found in the cytoplasm. It catalyses the reaction UDP-N-acetyl-alpha-D-muramate + L-alanine + ATP = UDP-N-acetyl-alpha-D-muramoyl-L-alanine + ADP + phosphate + H(+). The protein operates within cell wall biogenesis; peptidoglycan biosynthesis. Its function is as follows. Cell wall formation. The chain is UDP-N-acetylmuramate--L-alanine ligase from Cupriavidus necator (strain ATCC 17699 / DSM 428 / KCTC 22496 / NCIMB 10442 / H16 / Stanier 337) (Ralstonia eutropha).